We begin with the raw amino-acid sequence, 407 residues long: Phosphopentomutase (407 aa).

The Mn(2+) site is built by aspartate 10, aspartate 306, histidine 311, aspartate 347, histidine 348, and histidine 359.

This sequence belongs to the phosphopentomutase family. Requires Mn(2+) as cofactor.

Its subcellular location is the cytoplasm. The catalysed reaction is 2-deoxy-alpha-D-ribose 1-phosphate = 2-deoxy-D-ribose 5-phosphate. The enzyme catalyses alpha-D-ribose 1-phosphate = D-ribose 5-phosphate. It functions in the pathway carbohydrate degradation; 2-deoxy-D-ribose 1-phosphate degradation; D-glyceraldehyde 3-phosphate and acetaldehyde from 2-deoxy-alpha-D-ribose 1-phosphate: step 1/2. In terms of biological role, isomerase that catalyzes the conversion of deoxy-ribose 1-phosphate (dRib-1-P) and ribose 1-phosphate (Rib-1-P) to deoxy-ribose 5-phosphate (dRib-5-P) and ribose 5-phosphate (Rib-5-P), respectively. The chain is Phosphopentomutase from Salmonella schwarzengrund (strain CVM19633).